The chain runs to 906 residues: Protein translocase subunit SecA (906 aa).

ATP contacts are provided by residues Gln86, 104–108, and Asp511; that span reads GEGKT. Basic and acidic residues-rich tracts occupy residues 853-865 and 877-888; these read HESV…RHDE and VRREGPKVKRND. The segment at 853-906 is disordered; it reads HESVIDNNQRHDEDEQEEAPKVQQVRREGPKVKRNDPCPCGSGKKYKQCHGKVE. Cys890, Cys892, Cys901, and His902 together coordinate Zn(2+). Positions 896 to 906 are enriched in basic residues; the sequence is KKYKQCHGKVE.

This sequence belongs to the SecA family. Monomer and homodimer. Part of the essential Sec protein translocation apparatus which comprises SecA, SecYEG and auxiliary proteins SecDF-YajC and YidC. Zn(2+) is required as a cofactor.

The protein resides in the cell inner membrane. It is found in the cytoplasm. The catalysed reaction is ATP + H2O + cellular proteinSide 1 = ADP + phosphate + cellular proteinSide 2.. In terms of biological role, part of the Sec protein translocase complex. Interacts with the SecYEG preprotein conducting channel. Has a central role in coupling the hydrolysis of ATP to the transfer of proteins into and across the cell membrane, serving both as a receptor for the preprotein-SecB complex and as an ATP-driven molecular motor driving the stepwise translocation of polypeptide chains across the membrane. This chain is Protein translocase subunit SecA, found in Francisella tularensis subsp. holarctica (strain FTNF002-00 / FTA).